Here is a 301-residue protein sequence, read N- to C-terminus: Oxygen-dependent coproporphyrinogen-III oxidase (301 aa).

Residue Ser-92 coordinates substrate. The a divalent metal cation site is built by His-96 and His-106. His-106 acts as the Proton donor in catalysis. Residue 108–110 participates in substrate binding; that stretch reads NVR. A divalent metal cation contacts are provided by His-145 and His-175. Residues 240 to 275 are important for dimerization; sequence YVEFNLVWDRGTLFGLQTGGRTESILMSMPPLVRWE. 258–260 provides a ligand contact to substrate; sequence GGR.

Belongs to the aerobic coproporphyrinogen-III oxidase family. Homodimer. Requires a divalent metal cation as cofactor.

The protein localises to the cytoplasm. The catalysed reaction is coproporphyrinogen III + O2 + 2 H(+) = protoporphyrinogen IX + 2 CO2 + 2 H2O. It participates in porphyrin-containing compound metabolism; protoporphyrin-IX biosynthesis; protoporphyrinogen-IX from coproporphyrinogen-III (O2 route): step 1/1. In terms of biological role, involved in the heme biosynthesis. Catalyzes the aerobic oxidative decarboxylation of propionate groups of rings A and B of coproporphyrinogen-III to yield the vinyl groups in protoporphyrinogen-IX. The protein is Oxygen-dependent coproporphyrinogen-III oxidase of Cronobacter sakazakii (strain ATCC BAA-894) (Enterobacter sakazakii).